Consider the following 802-residue polypeptide: Threonine--tRNA ligase 2, cytoplasmic (802 aa).

Ala2 carries the post-translational modification N-acetylalanine. 2 coiled-coil regions span residues 3–23 (AEALAAEAVASRLERQEEDIR) and 76–96 (AEERSRQATLESAELEAAQEA). Positions 86–98 (ESAELEAAQEAGA) are enriched in low complexity. Positions 86-123 (ESAELEAAQEAGAQPPPSQSQDKDMKKKKMKESEADSE) are disordered. Basic and acidic residues predominate over residues 106-123 (QDKDMKKKKMKESEADSE). Positions 157–222 (DTSNIITVRV…EGDSSLELLT (66 aa)) constitute a TGS domain. Ser453 carries the phosphoserine modification. Positions 786–792 (KLKNLRK) match the Nuclear localization signal motif.

Belongs to the class-II aminoacyl-tRNA synthetase family. In terms of assembly, may be a component of the multisynthetase complex (MSC), a large multi-subunit complex which contains at least eight different aminoacyl-tRNA synthetases plus three auxillary subunits AIMP1, AIMP2 and EEF1E1. Interacts with the MSC components EPRS1, AIMP1, AIMP2 and KARS1.

It is found in the cytoplasm. It localises to the nucleus. It catalyses the reaction tRNA(Thr) + L-threonine + ATP = L-threonyl-tRNA(Thr) + AMP + diphosphate + H(+). Catalyzes the attachment of threonine to tRNA(Thr) in a two-step reaction: threonine is first activated by ATP to form Thr-AMP and then transferred to the acceptor end of tRNA(Thr). Also edits incorrectly charged tRNA(Thr) via its editing domain, at the post-transfer stage. This Homo sapiens (Human) protein is Threonine--tRNA ligase 2, cytoplasmic.